Here is a 760-residue protein sequence, read N- to C-terminus: Cyclin-D-binding Myb-like transcription factor 1 (760 aa).

The segment at 1 to 237 is interaction with CCND2; that stretch reads MSTVEEDSDT…TPEEIEKLKE (237 aa). The required for transcriptional activation stretch occupies residues 87–170; that stretch reads VTMTATTEVA…IDILMNNIER (84 aa). Residues 87 to 458 form a required for DNA-binding region; the sequence is VTMTATTEVA…DNTAISSSPM (372 aa). The tract at residues 176-760 is interaction with CCND1, CCND2 and CCND3; sequence GIKDATEIIF…KDVEDLVNCH (585 aa). In terms of domain architecture, Myb-like 1 spans 225–263; it reads GKYTPEEIEKLKELRIKHGNDWATIGAALGRSASSVKDR. Positions 268–333 constitute an HTH myb-type domain; the sequence is KDTCNTGKWT…KWLNYLNWKQ (66 aa). Residues 306 to 329 constitute a DNA-binding region (H-T-H motif); the sequence is WAAVAERVGTRSEKQCRSKWLNYL. A Myb-like 2 domain is found at 339 to 388; it reads WTKEDEINLILRIAELDVADENDINWDLLAEGWSSVRSPQWLRSKWWTIK. Disordered stretches follow at residues 414–435 and 738–760; these read KNNP…NTNS and IGSS…VNCH. A required for transcriptional activation region spans residues 459-760; it reads AALQIPVQIT…KDVEDLVNCH (302 aa).

It belongs to the DMTF1 family. Interacts with the D-type cyclins CCND1, CCND2 and CCND3. Interaction with D-type cyclins may modulate transcriptional activation by this protein. Post-translationally, phosphorylated by the cyclin-D2/CDK4, cyclin-D3/CDK4 and cyclin-D2/CDK6 complexes and to a lesser extent by the cyclin-D1/CDK4 complex. In terms of tissue distribution, expressed at relatively low levels in colonic mucosa, ovary, peripheral leukocytes, prostate and small intestine, and at higher levels in spleen, testis and thymus. Expressed in multiple regions of the brain and CNS including amygdala, caudate, corpus callosum, hippocampus, substantia nigra and subthalamic nucleus. Isoform 1 is the predominant isoform in monocytes, macrophages and neutrophils, isoform 2 is most strongly expressed in peripheral blood leukocytes and quiescent CD34 positive cells, and isoform 3 is expressed at low levels in all hematopoietic cell types. Expression is frequently reduced in non-small-cell lung carcinomas (NSCLC) due to hemizygous gene deletion, strongly suggesting that this locus is haploinsufficient for tumor suppression. Loss of this locus frequently occurs in tumors which retain wild-type CDKN2A/ARF and p53/TP53 loci. Hemizygous gene deletion has also been observed in leukemic blasts from patients with abnormalities of the long arm of chromosome 7.

Its subcellular location is the nucleus. Its function is as follows. Transcriptional activator which activates the CDKN2A/ARF locus in response to Ras-Raf signaling, thereby promoting p53/TP53-dependent growth arrest. Binds to the consensus sequence 5'-CCCG[GT]ATGT-3'. Isoform 1 may cooperate with MYB to activate transcription of the ANPEP gene. Isoform 2 may antagonize transcriptional activation by isoform 1. In Homo sapiens (Human), this protein is Cyclin-D-binding Myb-like transcription factor 1 (DMTF1).